Reading from the N-terminus, the 100-residue chain is Omega-hexatoxin-Asp2b (100 aa).

The N-terminal stretch at 1–23 (MKFSKLSITLAVILTQAVFVLCG) is a signal peptide. The propeptide occupies 24–55 (MKNEDFMEKGLESNELHDAIKKPVNSGKPDTE). Disulfide bonds link Cys60–Cys73, Cys66–Cys79, and Cys72–Cys84.

It belongs to the neurotoxin 15 family. 02 (omega-actx) subfamily. Expressed by the venom gland.

It localises to the secreted. Potent inhibitor of insect, but not mammalian, voltage-gated calcium channels (Cav). The polypeptide is Omega-hexatoxin-Asp2b (Atrax sp. (strain Illawarra) (Funnel-web spider)).